The following is a 182-amino-acid chain: Large ribosomal subunit protein uL16 (182 aa).

Belongs to the universal ribosomal protein uL16 family.

The protein is Large ribosomal subunit protein uL16 of Pyrobaculum neutrophilum (strain DSM 2338 / JCM 9278 / NBRC 100436 / V24Sta) (Thermoproteus neutrophilus).